We begin with the raw amino-acid sequence, 286 residues long: Thymidylate synthase (286 aa).

DUMP contacts are provided by residues Arg-21 and 136–137 (RR). The Nucleophile role is filled by Cys-156. Residues 176 to 179 (RSVD), Asn-187, and 217 to 219 (HIY) contribute to the dUMP site. Residue Asp-179 coordinates (6R)-5,10-methylene-5,6,7,8-tetrahydrofolate. Ala-285 is a (6R)-5,10-methylene-5,6,7,8-tetrahydrofolate binding site.

The protein belongs to the thymidylate synthase family. As to quaternary structure, homodimer.

The enzyme catalyses dUMP + (6R)-5,10-methylene-5,6,7,8-tetrahydrofolate = 7,8-dihydrofolate + dTMP. It functions in the pathway pyrimidine metabolism; dTTP biosynthesis. This chain is Thymidylate synthase (TD), found in Enterobacteria phage T4 (Bacteriophage T4).